A 705-amino-acid polypeptide reads, in one-letter code: Choline transporter-like protein 2 (705 aa).

The Cytoplasmic portion of the chain corresponds to 1–33 (MGKDSQHYYGKHGTPQKYDPTFKGPIYNRGCTD). Threonine 14 carries the phosphothreonine modification. A helical membrane pass occupies residues 34–54 (IICCVLLFLAIVGYVAVGIIA). The Extracellular segment spans residues 55–232 (WTHGDPRKVI…QIFEDYTVSW (178 aa)). Residues asparagine 187 and asparagine 200 are each glycosylated (N-linked (GlcNAc...) asparagine). A helical transmembrane segment spans residues 233 to 253 (YWIVIGLVIAMLLSLMFIVLL). Over 254–256 (RFL) the chain is Cytoplasmic. The chain crosses the membrane as a helical span at residues 257 to 277 (AGVMVWVMIVMVILVLGYGIF). Residues 278–315 (HCYAEYSRLRGEAGSDVSLVDLGFQTDLRVYLHLRQTW) lie on the Extracellular side of the membrane. The helical transmembrane segment at 316 to 336 (MAFMIILSILEVVIILLLIFL) threads the bilayer. The Cytoplasmic portion of the chain corresponds to 337 to 364 (RKRILIAIALIKEASRAVGHVMCSMLYP). A helical membrane pass occupies residues 365–385 (LVTFFLLCLCIAYWASTSVFL). Topologically, residues 386–453 (STSNVAVYKI…LQIFNAFMFF (68 aa)) are extracellular. A glycan (N-linked (GlcNAc...) asparagine) is linked at asparagine 416. The helical transmembrane segment at 454-476 (WLANFVLALGQVTLAGAFASYYW) threads the bilayer. The Cytoplasmic segment spans residues 477–503 (AMRKPDDMPAFPLFSAFGRALRYHTGS). The helical transmembrane segment at 504 to 524 (LAFGSLILAIVQIIRVMLEYL) threads the bilayer. Residues 525 to 562 (DQRLKAAQNKFAKFLMVCLKCCFWCLEKFIKFLNRNAY) are Extracellular-facing. A helical transmembrane segment spans residues 563–583 (IMIAIYGTNFCTSARNAFFLL). Residues 584-598 (MRNIIRVAVLDKVTD) lie on the Cytoplasmic side of the membrane. A helical membrane pass occupies residues 599 to 619 (FLFLLGKLLIVGSVGILAFFF). The Extracellular portion of the chain corresponds to 620 to 637 (FTHRIRIVQDTAPPLNYY). Residues 638 to 658 (WVPILTVIIGSYLIAHGFFSV) form a helical membrane-spanning segment. Topologically, residues 659–705 (YGMCVDTLFLCFLEDLERNDGSAERPYFMSSTLKKLLNKTNKKVAES) are cytoplasmic.

Belongs to the CTL (choline transporter-like) family. Interacts with COCH. N-glycosylated.

The protein resides in the cell membrane. It localises to the mitochondrion outer membrane. It carries out the reaction choline(out) + n H(+)(in) = choline(in) + n H(+)(out). The catalysed reaction is ethanolamine(out) + n H(+)(in) = ethanolamine(in) + n H(+)(out). In terms of biological role, exhibits choline transporter activity, as choline/H+ antiporter. Also acts as a low-affinity ethanolamine/H+ antiporter, regulating the supply of extracellular ethanolamine (Etn) for the CDP-Etn pathway, redistribute intracellular Etn and balance the CDP-Cho and CDP-Etn arms of the Kennedy pathway. The polypeptide is Choline transporter-like protein 2 (Slc44a2) (Rattus norvegicus (Rat)).